The sequence spans 209 residues: Thymidylate kinase (209 aa).

Glycine 11–threonine 18 lines the ATP pocket.

The protein belongs to the thymidylate kinase family.

It catalyses the reaction dTMP + ATP = dTDP + ADP. Functionally, phosphorylation of dTMP to form dTDP in both de novo and salvage pathways of dTTP synthesis. This is Thymidylate kinase (tmk) from Pasteurella multocida (strain Pm70).